A 400-amino-acid chain; its full sequence is Snake venom metalloproteinase H2 (400 aa).

Positions 1-6 (FPYQGS) are cleaved as a signal peptide. The propeptide occupies 7-176 (STILESGNVN…KKASQLIVST (170 aa)). The Peptidase M12B domain occupies 180–377 (RYMEIVIVVD…ENPPCILNKP (198 aa)). E183 and D267 together coordinate Ca(2+). 3 disulfide bridges follow: C291/C372, C331/C356, and C333/C339. Residue H316 participates in Zn(2+) binding. Residue E317 is part of the active site. Residues H320 and H326 each coordinate Zn(2+). 7 residues coordinate Ca(2+): C372, N375, V387, N390, L392, E394, and D400. A propeptide spanning residues 378-400 (LRTDTVSTPVSGNELLEAGKDYD) is cleaved from the precursor.

The protein belongs to the venom metalloproteinase (M12B) family. P-I subfamily. Monomer. Zn(2+) serves as cofactor. In terms of tissue distribution, expressed by the venom gland.

Its subcellular location is the secreted. Its function is as follows. Snake venom metalloproteinase that impairs hemostasis in the envenomed animal. The protein is Snake venom metalloproteinase H2 of Deinagkistrodon acutus (Hundred-pace snake).